The primary structure comprises 224 residues: Protein-L-isoaspartate O-methyltransferase (224 aa).

Ser70 is a catalytic residue.

Belongs to the methyltransferase superfamily. L-isoaspartyl/D-aspartyl protein methyltransferase family.

The protein resides in the cytoplasm. It catalyses the reaction [protein]-L-isoaspartate + S-adenosyl-L-methionine = [protein]-L-isoaspartate alpha-methyl ester + S-adenosyl-L-homocysteine. Its function is as follows. Catalyzes the methyl esterification of L-isoaspartyl residues in peptides and proteins that result from spontaneous decomposition of normal L-aspartyl and L-asparaginyl residues. It plays a role in the repair and/or degradation of damaged proteins. This is Protein-L-isoaspartate O-methyltransferase from Cellvibrio japonicus (strain Ueda107) (Pseudomonas fluorescens subsp. cellulosa).